A 265-amino-acid polypeptide reads, in one-letter code: Speedy protein E13 (265 aa).

The disordered stretch occupies residues 1-80 (MGQILGKIMM…EPEKELAPEP (80 aa)). Residues 66–80 (DESDDEPEKELAPEP) are compositionally biased toward acidic residues.

The protein belongs to the Speedy/Ringo family.

This Homo sapiens (Human) protein is Speedy protein E13.